Consider the following 245-residue polypeptide: Ribosomal RNA small subunit methyltransferase G (245 aa).

S-adenosyl-L-methionine contacts are provided by residues Gly-85, Phe-90, 108–110 (DST), 136–137 (AE), and Arg-155.

The protein belongs to the methyltransferase superfamily. RNA methyltransferase RsmG family.

The protein localises to the cytoplasm. Specifically methylates the N7 position of a guanine in 16S rRNA. This Trichormus variabilis (strain ATCC 29413 / PCC 7937) (Anabaena variabilis) protein is Ribosomal RNA small subunit methyltransferase G.